The chain runs to 1368 residues: Alpha-latrotoxin-Lg1a (1368 aa).

The segment at 217 to 236 (VLYAILYGTQTYVSVMFFLL) is helix H8 is the probable transmembrane region of the tetrameric pore inserted in the target cell membrane. Cysteine 392 and cysteine 1044 are oxidised to a cystine. 20 ANK repeats span residues 469–500 (QGRT…DINQ), 504–533 (KGYT…SVNS), 538–568 (FLQT…NINE), 572–601 (DGFT…DVNV), 605–635 (KGLT…DINA), 639–669 (NNMT…NANA), 674–704 (GLLS…NYNL), 708–737 (GDIT…NINQ), 741–770 (EKYT…NLEA), 774–803 (TGAT…NWRE), 807–837 (NGQM…VLDI), 841–870 (NLDT…KVNT), 874–903 (KGQA…NVYI), 907–936 (DGLN…KFEW), 953–981 (ISHF…GHYS), 982–1011 (ICSP…SVDG), 1013–1042 (KPDT…KVNH), 1046–1075 (NGMT…DFRR), 1079–1109 (LDAT…NINI), and 1115–1144 (NKET…DENI). The segment at 1174–1177 (KFRR) is furin-like endopeptidase recognition region. The propeptide occupies 1178-1368 (EYKSSNGEHD…GETLHLFHES (191 aa)).

This sequence belongs to the cationic peptide 01 (latrotoxin) family. 03 (alpha-latrotoxin) subfamily. In terms of assembly, homotetramer in membranes. In terms of tissue distribution, expressed in venom gland, cephalothorax, and abdomen tissues from both males and females.

The protein localises to the secreted. Its subcellular location is the target cell membrane. Functionally, presynaptic neurotoxin that causes massive release of neurotransmitters from vertebrate (but not invertebrate) nerve terminals and endocrine cells via a complex mechanism involving activation of receptor(s) and toxin insertion into the plasma membrane with subsequent pore formation. Binds to neurexin-1-alpha (NRXN1) in a calcium dependent manner, adhesion G protein-coupled receptor L1 (ADGRL1, also termed latrophilin-1 and calcium-independent receptor of latrotoxin (CIRL)), and receptor-type tyrosine-protein phosphatase S (PTPRS), also termed PTP sigma. NRXN1 and PTPRS are suggested to provide a platform for binding and subsequent pore formation events. In contrast, binding to ADGRL1 does not involve oligomerization and channel formation, but direct downstream stimulation of the synaptic fusion machinery. The protein is Alpha-latrotoxin-Lg1a of Latrodectus geometricus (Brown widow spider).